We begin with the raw amino-acid sequence, 239 residues long: Gamma-lactamase MBL2 (239 aa).

Positions 56, 58, 60, 61, 141, and 165 each coordinate Zn(2+).

It belongs to the metallo-beta-lactamase superfamily.

Gamma-lactamase; part of the Fusarium detoxification of benzoxazolinone cluster 2 (FDB2) involved in the degradation of benzoxazolinones produced by the host plant. Maize, wheat, and rye produce the 2 benzoxazinone phytoanticipins 2,4-dihy-droxy-7-methoxy-1,4-benzoxazin-3-one (DIMBOA) and 2,4-dihydroxy-1,4-benzoxazin-3-one (DIBOA) that, due to their inherent instability once released, spontaneously degrade to the more stable corresponding benzoxazolinones, 6-methoxy-2-benzoxazolinone (MBOA) and 2-benzoxazolinone (BOA), respectively. The first step in the detoxification of benzoxazolinones involves the hydrolysis of the cyclic ester bond of benzoxazolinones by the FDB1 cluster gamma-lactamase MBL1 to aminophenols. MBL1 is able to convert BOA into 2-aminophenol (2-AP), as well as MBOA into 5-methoxy-2-aminophenol (2-AMP). The FDB2 cluster N-malonyltransferase FDB2/NAT1 then metabolizes aminophenols via N-malonylation to non-toxic malonamic acids. FDB2/NAT1 converts 2-AP into N-(2-hydroxyphenyl) malonamic acid (HPMA) and 2-AMP into N-(2-hydroxy-4-methoxyphenyl) malonamic acid (HMPMA). The duplicated dienlactone hydrolases DLH1 and DLH2 may provide redundant function for hydrolyzing the lactone moiety in the BOA molecule. The roles of the amidases and other enzymes encoded by the 2 FDB clusters have not been identified so far. In Gibberella moniliformis (strain M3125 / FGSC 7600) (Maize ear and stalk rot fungus), this protein is Gamma-lactamase MBL2.